We begin with the raw amino-acid sequence, 337 residues long: Cytoskeleton protein RodZ (337 aa).

Residues 1–111 (MNTEATHDQN…LGKRRKKRDG (111 aa)) are Cytoplasmic-facing. The HTH cro/C1-type domain maps to 19-71 (LRNAREQLGLSQQAVAERLCLKVSTVRDIEEDKAPADLASTFLRGYIRSYARL). The H-T-H motif DNA-binding region spans 30-49 (QQAVAERLCLKVSTVRDIEE). A helical; Signal-anchor for type II membrane protein membrane pass occupies residues 112 to 132 (WLMTFTWLVLFVVIGLSGAWW). Over 133 to 337 (WQDHKAQQEE…TLNAEQSPAQ (205 aa)) the chain is Periplasmic. The segment covering 145 to 167 (TMADQSSAELSSNSEQGQSVPLN) has biased composition (polar residues). The tract at residues 145–236 (TMADQSSAEL…TAATTPDGAA (92 aa)) is disordered. Positions 168-207 (TSTTTDPATTSTPPASVDTTATNTQTPAVTAPAPAVDPQQ) are enriched in low complexity. Polar residues predominate over residues 208–218 (NAVVSPSQANV). Over residues 219-236 (DTAATPAPTAATTPDGAA) the composition is skewed to low complexity.

It belongs to the RodZ family.

The protein localises to the cell inner membrane. Its function is as follows. Cytoskeletal protein that is involved in cell-shape control through regulation of the length of the long axis. The protein is Cytoskeleton protein RodZ of Escherichia coli O9:H4 (strain HS).